Reading from the N-terminus, the 231-residue chain is Large ribosomal subunit protein uL1 (231 aa).

It belongs to the universal ribosomal protein uL1 family. In terms of assembly, part of the 50S ribosomal subunit.

Binds directly to 23S rRNA. The L1 stalk is quite mobile in the ribosome, and is involved in E site tRNA release. In terms of biological role, protein L1 is also a translational repressor protein, it controls the translation of the L11 operon by binding to its mRNA. This Nitrosococcus oceani (strain ATCC 19707 / BCRC 17464 / JCM 30415 / NCIMB 11848 / C-107) protein is Large ribosomal subunit protein uL1.